The primary structure comprises 133 residues: Protein NrdI (133 aa).

This sequence belongs to the NrdI family.

In terms of biological role, probably involved in ribonucleotide reductase function. This chain is Protein NrdI, found in Escherichia coli O17:K52:H18 (strain UMN026 / ExPEC).